Consider the following 350-residue polypeptide: CMP-N-acetylneuraminate-beta-galactosamide-alpha-2,3-sialyltransferase 2 (350 aa).

At 1-6 (MKCSLR) the chain is on the cytoplasmic side. Residues 7–27 (VWFLSMAFLLVFIMSLLFTYS) form a helical; Signal-anchor for type II membrane protein membrane-spanning segment. The Lumenal portion of the chain corresponds to 28–350 (HHSMATLPYL…ASKIEVYRGN (323 aa)). 3 disulfide bridges follow: cysteine 70–cysteine 75, cysteine 72–cysteine 149, and cysteine 152–cysteine 291. The substrate site is built by glutamine 116, asparagine 157, and asparagine 180. An N-linked (GlcNAc...) asparagine glycan is attached at asparagine 211. Residues tyrosine 240, tyrosine 276, glycine 280, glycine 300, histidine 309, and histidine 326 each coordinate substrate.

The protein belongs to the glycosyltransferase 29 family. In terms of assembly, homodimer; disulfide-linked. Homodimer formation occurs in the endoplasmic reticulum. The soluble form derives from the membrane form by proteolytic processing. In terms of processing, N-glycosylated; necessary for proper exit from endoplasmic reticulum and trafficking to the Golgi apparatus. As to expression, strongly expressed in brain and liver and to a lesser extent in heart and kidney. Scarcely detectable in lung, pancreas, spleen and submaxillary gland. Expressed in L5 dorsal root ganglion (DRG) neurons (at protein level).

The protein resides in the golgi apparatus. It localises to the golgi stack membrane. It is found in the secreted. The catalysed reaction is a beta-D-galactosyl-(1-&gt;3)-N-acetyl-alpha-D-galactosaminyl derivative + CMP-N-acetyl-beta-neuraminate = an N-acetyl-alpha-neuraminyl-(2-&gt;3)-beta-D-galactosyl-(1-&gt;3)-N-acetyl-alpha-D-galactosaminyl derivative + CMP + H(+). It catalyses the reaction a ganglioside GM1 (d18:1(4E)) + CMP-N-acetyl-beta-neuraminate = a ganglioside GD1a (d18:1(4E)) + CMP + H(+). The enzyme catalyses ganglioside GM1 (d18:1(4E)/18:0) + CMP-N-acetyl-beta-neuraminate = ganglioside GD1a (18:1(4E)/18:0) + CMP + H(+). It carries out the reaction a ganglioside GA1 + CMP-N-acetyl-beta-neuraminate = a ganglioside GM1b + CMP + H(+). The catalysed reaction is a ganglioside GA1 (d18:1(4E)) + CMP-N-acetyl-beta-neuraminate = a ganglioside GM1b (d18:1(4E)) + CMP + H(+). It catalyses the reaction a ganglioside GD1b + CMP-N-acetyl-beta-neuraminate = a ganglioside GT1b + CMP + H(+). The enzyme catalyses a ganglioside GD1b (d18:1(4E)) + CMP-N-acetyl-beta-neuraminate = a ganglioside GT1b (d18:1(4E)) + CMP + H(+). It carries out the reaction a globoside GalGb4Cer + CMP-N-acetyl-beta-neuraminate = a globoside MSGG + CMP + H(+). It functions in the pathway protein modification; protein glycosylation. It participates in glycolipid biosynthesis. A beta-galactoside alpha2-3 sialyltransferase primarily involved in terminal sialylation of ganglio and globo series glycolipids. Catalyzes the transfer of sialic acid (N-acetyl-neuraminic acid; Neu5Ac) from the nucleotide sugar donor CMP-Neu5Ac onto acceptor Galbeta-(1-&gt;3)-GalNAc-terminated glycoconjugates through an alpha2-3 linkage. Sialylates GM1/GM1a, GA1/asialo-GM1 and GD1b gangliosides to form GD1a, GM1b and GT1b, respectively. Together with ST3GAL3, primarily responsible for biosynthesis of brain GD1a and GT1b that function as ligands for myelin-associated glycoprotein MAG on axons, regulating MAG expression and axonal myelin stability and regeneration. Via GT1b regulates TLR2 signaling in spinal cord microglia in response to nerve injury. Responsible for the sialylation of the pluripotent stem cell- and cancer stem cell-associated antigen SSEA3, forming SSEA4. Sialylates with low efficiency asialofetuin, presumably onto O-glycosidically linked Galbeta-(1-&gt;3)-GalNAc-O-Ser. This chain is CMP-N-acetylneuraminate-beta-galactosamide-alpha-2,3-sialyltransferase 2, found in Mus musculus (Mouse).